A 308-amino-acid polypeptide reads, in one-letter code: Ribosomal RNA large subunit methyltransferase F (308 aa).

It belongs to the methyltransferase superfamily. METTL16/RlmF family.

The protein localises to the cytoplasm. The enzyme catalyses adenosine(1618) in 23S rRNA + S-adenosyl-L-methionine = N(6)-methyladenosine(1618) in 23S rRNA + S-adenosyl-L-homocysteine + H(+). Its function is as follows. Specifically methylates the adenine in position 1618 of 23S rRNA. The polypeptide is Ribosomal RNA large subunit methyltransferase F (Salmonella heidelberg (strain SL476)).